We begin with the raw amino-acid sequence, 226 residues long: Sugar fermentation stimulation protein homolog (226 aa).

It belongs to the SfsA family.

This is Sugar fermentation stimulation protein homolog from Ruminiclostridium cellulolyticum (strain ATCC 35319 / DSM 5812 / JCM 6584 / H10) (Clostridium cellulolyticum).